Reading from the N-terminus, the 174-residue chain is ATP-dependent protease subunit HslV (174 aa).

Thr2 is a catalytic residue. The Na(+) site is built by Gly157, Cys160, and Thr163.

It belongs to the peptidase T1B family. HslV subfamily. As to quaternary structure, a double ring-shaped homohexamer of HslV is capped on each side by a ring-shaped HslU homohexamer. The assembly of the HslU/HslV complex is dependent on binding of ATP.

The protein resides in the cytoplasm. The enzyme catalyses ATP-dependent cleavage of peptide bonds with broad specificity.. Allosterically activated by HslU binding. In terms of biological role, protease subunit of a proteasome-like degradation complex believed to be a general protein degrading machinery. This Shewanella putrefaciens (strain CN-32 / ATCC BAA-453) protein is ATP-dependent protease subunit HslV.